The primary structure comprises 533 residues: Trigger factor (533 aa).

In terms of domain architecture, PPIase FKBP-type spans 164 to 249; the sequence is GDQLIIDFTG…VKQVKVETDT (86 aa). Residues 436–533 form a disordered region; that stretch reads EAAIEAEAEE…APAKKPAAKK (98 aa). Positions 465-477 are enriched in basic residues; that stretch reads AAAKKAPAKKAPA. Basic and acidic residues predominate over residues 481–490; that stretch reads AAKDGDEKPA. Basic residues-rich tracts occupy residues 494–506 and 515–533; these read APAK…KAST and PAKK…AAKK.

The protein belongs to the FKBP-type PPIase family. Tig subfamily.

The protein resides in the cytoplasm. The enzyme catalyses [protein]-peptidylproline (omega=180) = [protein]-peptidylproline (omega=0). Functionally, involved in protein export. Acts as a chaperone by maintaining the newly synthesized protein in an open conformation. Functions as a peptidyl-prolyl cis-trans isomerase. In Erythrobacter litoralis (strain HTCC2594), this protein is Trigger factor.